We begin with the raw amino-acid sequence, 335 residues long: Acetyl-coenzyme A carboxylase carboxyl transferase subunit alpha (335 aa).

Residues 38 to 292 (TLEQKAEELR…ATALSEEIEN (255 aa)) form the CoA carboxyltransferase C-terminal domain.

It belongs to the AccA family. As to quaternary structure, acetyl-CoA carboxylase is a heterohexamer composed of biotin carboxyl carrier protein (AccB), biotin carboxylase (AccC) and two subunits each of ACCase subunit alpha (AccA) and ACCase subunit beta (AccD).

It is found in the cytoplasm. The catalysed reaction is N(6)-carboxybiotinyl-L-lysyl-[protein] + acetyl-CoA = N(6)-biotinyl-L-lysyl-[protein] + malonyl-CoA. It functions in the pathway lipid metabolism; malonyl-CoA biosynthesis; malonyl-CoA from acetyl-CoA: step 1/1. In terms of biological role, component of the acetyl coenzyme A carboxylase (ACC) complex. First, biotin carboxylase catalyzes the carboxylation of biotin on its carrier protein (BCCP) and then the CO(2) group is transferred by the carboxyltransferase to acetyl-CoA to form malonyl-CoA. The protein is Acetyl-coenzyme A carboxylase carboxyl transferase subunit alpha of Heliobacterium modesticaldum (strain ATCC 51547 / Ice1).